A 305-amino-acid polypeptide reads, in one-letter code: Glycine--tRNA ligase alpha subunit (305 aa).

This sequence belongs to the class-II aminoacyl-tRNA synthetase family. In terms of assembly, tetramer of two alpha and two beta subunits.

The protein localises to the cytoplasm. The catalysed reaction is tRNA(Gly) + glycine + ATP = glycyl-tRNA(Gly) + AMP + diphosphate. This is Glycine--tRNA ligase alpha subunit from Streptococcus pyogenes serotype M2 (strain MGAS10270).